The sequence spans 451 residues: AP-4 complex subunit mu (451 aa).

Residues 184–450 (REEIFVDIIE…VTQANSYVAR (267 aa)) form the MHD domain.

The protein belongs to the adaptor complexes medium subunit family. In terms of assembly, adaptor protein complex 4 (AP-4) is a heterotetramer composed of two large adaptins (epsilon-type subunit and beta-type subunit), a medium adaptin (mu-type subunit) and a small adaptin (sigma-type subunit).

Its subcellular location is the golgi apparatus. The protein resides in the trans-Golgi network. The protein localises to the membrane. It localises to the coated pit. Its function is as follows. Subunit of novel type of clathrin- or non-clathrin-associated protein coat involved in targeting proteins from the trans-Golgi network (TGN) to the endosomal-lysosomal system. The polypeptide is AP-4 complex subunit mu (AP4M) (Arabidopsis thaliana (Mouse-ear cress)).